The sequence spans 180 residues: D-lyxose ketol-isomerase (180 aa).

Residue K62 coordinates D-fructose. Mn(2+)-binding residues include H75 and H77. Position 86 (K86) interacts with D-fructose. 2 residues coordinate Mn(2+): E88 and H143. The D-fructose site is built by E156, D166, and R175.

Belongs to the D-lyxose ketol-isomerase family. Homodimer; disulfide-linked. Stabilized by a disulfide bond between the two monomers of the dimeric enzyme and increased hydrophobicity at the dimer interface. Mn(2+) is required as a cofactor.

The enzyme catalyses D-lyxose = D-xylulose. In terms of biological role, sugar isomerase that catalyzes the reversible isomerization of D-lyxose to D-xylulose. Is highly specific for the substrate D-lyxose, showing less than 2% activity towards mannose and other substrates reported for lyxose isomerases. The protein is D-lyxose ketol-isomerase of Thermofilum sp. (strain ex4484_79).